A 157-amino-acid polypeptide reads, in one-letter code: Transcriptional regulator MraZ (157 aa).

SpoVT-AbrB domains are found at residues 7-52 (TYTM…AGGN) and 83-126 (SETL…EPER).

This sequence belongs to the MraZ family. As to quaternary structure, forms oligomers.

The protein localises to the cytoplasm. It is found in the nucleoid. This is Transcriptional regulator MraZ from Xanthobacter autotrophicus (strain ATCC BAA-1158 / Py2).